A 474-amino-acid polypeptide reads, in one-letter code: Bifunctional ribulose 5-phosphate reductase/CDP-ribitol pyrophosphorylase Bcs1 (474 aa).

The ribitol-5-phosphate cytidylyltransferase stretch occupies residues Met1–Phe238. Residues Tyr250 to Lys474 are ribulose-5-phosphate reductase.

This sequence in the N-terminal section; belongs to the IspD/TarI cytidylyltransferase family. The protein in the C-terminal section; belongs to the short-chain dehydrogenases/reductases (SDR) family. As to quaternary structure, monomer.

It catalyses the reaction D-ribitol 5-phosphate + CTP + H(+) = CDP-L-ribitol + diphosphate. The catalysed reaction is D-ribitol 5-phosphate + NADP(+) = D-ribulose 5-phosphate + NADPH + H(+). Its pathway is capsule biogenesis; capsule polysaccharide biosynthesis. Its function is as follows. Catalyzes the NADPH-dependent reduction of D-ribulose 5-phosphate to D-ribitol 5-phosphate and the further reaction of D-ribitol 5-phosphate with CTP to form CDP-ribitol. This Haemophilus influenzae protein is Bifunctional ribulose 5-phosphate reductase/CDP-ribitol pyrophosphorylase Bcs1.